We begin with the raw amino-acid sequence, 855 residues long: Suppressor of tumorigenicity 14 protein homolog (855 aa).

Topologically, residues M1 to W55 are cytoplasmic. A Phosphoserine modification is found at S13. The helical; Signal-anchor for type II membrane protein transmembrane segment at V56 to V76 threads the bilayer. Residues W77–V855 lie on the Extracellular side of the membrane. The region spanning V86–P203 is the SEA domain. N107 carries an N-linked (GlcNAc...) asparagine glycan. C214 and C244 form a disulfide bridge. CUB domains are found at residues C214–F331 and C340–Y444. 2 N-linked (GlcNAc...) asparagine glycosylation sites follow: N302 and N365. Intrachain disulfides connect C340–C366 and C397–C410. The N-linked (GlcNAc...) asparagine glycan is linked to N421. LDL-receptor class A domains lie at D451–C488, N489–G522, C523–S561, and V565–C604. 13 disulfide bridges follow: C453-C464, C459-C477, C471-C486, C488-C501, C496-C514, C508-C523, C525-C537, C532-C550, C544-C559, C567-C579, C574-C593, C587-C602, and C641-C657. N-linked (GlcNAc...) asparagine glycosylation is present at N489. The 240-residue stretch at V615–G854 folds into the Peptidase S1 domain. Residues H656 and D711 each act as charge relay system in the active site. N772 is a glycosylation site (N-linked (GlcNAc...) asparagine). Intrachain disulfides connect C776/C790 and C801/C830. S805 (charge relay system) is an active-site residue.

The protein belongs to the peptidase S1 family. In terms of assembly, interacts with CDCP1. May interact with TMEFF1. As to expression, highly expressed in intestine, kidney, lung, and thymus. Not expressed in skeletal muscle, liver, heart, testis and brain.

The protein localises to the membrane. The catalysed reaction is Cleaves various synthetic substrates with Arg or Lys at the P1 position and prefers small side-chain amino acids, such as Ala and Gly, at the P2 position.. Functionally, exhibits trypsin-like activity as defined by cleavage of synthetic substrates with Arg or Lys as the P1 site. Involved in the terminal differentiation of keratinocytes through prostasin (PRSS8) activation and filaggrin (FLG) processing. Proteolytically cleaves and therefore activates TMPRSS13. The polypeptide is Suppressor of tumorigenicity 14 protein homolog (St14) (Mus musculus (Mouse)).